Reading from the N-terminus, the 238-residue chain is UPF0173 metal-dependent hydrolase Helmi_16730 (238 aa).

This sequence belongs to the UPF0173 family.

The protein is UPF0173 metal-dependent hydrolase Helmi_16730 of Heliobacterium modesticaldum (strain ATCC 51547 / Ice1).